The chain runs to 116 residues: U11-theraphotoxin-Hhn1b (116 aa).

An N-terminal signal peptide occupies residues 1–21 (MNTVRVAFLLVFVLAVSLGQA). Residues 22–74 (DKDENRMEMQEKTEQGKSYLDFAENLLLQKLEELEAKLLEEDSEESRNSRQKR) constitute a propeptide that is removed on maturation. Residues 61–83 (EEDSEESRNSRQKRCIGEGVPCD) form a disordered region. Intrachain disulfides connect C75-C90, C82-C95, and C89-C110.

It belongs to the neurotoxin 14 (magi-1) family. 01 (HNTX-16) subfamily. As to expression, expressed by the venom gland.

It is found in the secreted. In terms of biological role, probable ion channel inhibitor. This is U11-theraphotoxin-Hhn1b from Cyriopagopus hainanus (Chinese bird spider).